The sequence spans 362 residues: Phosphoserine aminotransferase (362 aa).

L-glutamate is bound by residues S9 and R42. Residues 76-77 (GR), W102, T153, D174, and Q197 each bind pyridoxal 5'-phosphate. K198 is modified (N6-(pyridoxal phosphate)lysine). A pyridoxal 5'-phosphate-binding site is contributed by 239-240 (NT).

Belongs to the class-V pyridoxal-phosphate-dependent aminotransferase family. SerC subfamily. Homodimer. Pyridoxal 5'-phosphate is required as a cofactor.

Its subcellular location is the cytoplasm. It catalyses the reaction O-phospho-L-serine + 2-oxoglutarate = 3-phosphooxypyruvate + L-glutamate. The enzyme catalyses 4-(phosphooxy)-L-threonine + 2-oxoglutarate = (R)-3-hydroxy-2-oxo-4-phosphooxybutanoate + L-glutamate. It participates in amino-acid biosynthesis; L-serine biosynthesis; L-serine from 3-phospho-D-glycerate: step 2/3. It functions in the pathway cofactor biosynthesis; pyridoxine 5'-phosphate biosynthesis; pyridoxine 5'-phosphate from D-erythrose 4-phosphate: step 3/5. In terms of biological role, catalyzes the reversible conversion of 3-phosphohydroxypyruvate to phosphoserine and of 3-hydroxy-2-oxo-4-phosphonooxybutanoate to phosphohydroxythreonine. This chain is Phosphoserine aminotransferase, found in Escherichia coli O1:K1 / APEC.